Reading from the N-terminus, the 879-residue chain is Alanine--tRNA ligase (879 aa).

The Zn(2+) site is built by H567, H571, C669, and H673.

The protein belongs to the class-II aminoacyl-tRNA synthetase family. Requires Zn(2+) as cofactor.

The protein localises to the cytoplasm. The enzyme catalyses tRNA(Ala) + L-alanine + ATP = L-alanyl-tRNA(Ala) + AMP + diphosphate. Catalyzes the attachment of alanine to tRNA(Ala) in a two-step reaction: alanine is first activated by ATP to form Ala-AMP and then transferred to the acceptor end of tRNA(Ala). Also edits incorrectly charged Ser-tRNA(Ala) and Gly-tRNA(Ala) via its editing domain. This Lactobacillus helveticus (strain DPC 4571) protein is Alanine--tRNA ligase.